Here is a 409-residue protein sequence, read N- to C-terminus: Translation initiation factor 2 subunit gamma (409 aa).

The tr-type G domain maps to 7 to 203 (QPEVNIGLVG…TIESEIPTPD (197 aa)). The G1 stretch occupies residues 16–23 (GHVDHGKT). Positions 19, 23, 44, and 46 each coordinate Mg(2+). 19–24 (DHGKTT) is a binding site for GTP. A G2 region spans residues 44 to 48 (GISIR). The G3 stretch occupies residues 90–93 (DAPG). GTP is bound by residues 146–149 (NKID) and 181–183 (SAQ). The tract at residues 146–149 (NKID) is G4. Residues 181–183 (SAQ) form a G5 region.

It belongs to the TRAFAC class translation factor GTPase superfamily. Classic translation factor GTPase family. EIF2G subfamily. As to quaternary structure, heterotrimer composed of an alpha, a beta and a gamma chain. Mg(2+) serves as cofactor.

It carries out the reaction GTP + H2O = GDP + phosphate + H(+). Its function is as follows. eIF-2 functions in the early steps of protein synthesis by forming a ternary complex with GTP and initiator tRNA. The sequence is that of Translation initiation factor 2 subunit gamma from Natronomonas pharaonis (strain ATCC 35678 / DSM 2160 / CIP 103997 / JCM 8858 / NBRC 14720 / NCIMB 2260 / Gabara) (Halobacterium pharaonis).